Reading from the N-terminus, the 1051-residue chain is Ubiquitin carboxyl-terminal hydrolase 28 (1051 aa).

The disordered stretch occupies residues 60-82 (DQRVKEPSHDTTAAEPSEVEESA). Ser-67 bears the Phosphoserine mark. Residues 97-116 (DNKDDLQAAIALSLLESPNI) enclose the UIM domain. Lys-99 participates in a covalent cross-link: Glycyl lysine isopeptide (Lys-Gly) (interchain with G-Cter in SUMO2). Over residues 121–135 (RDLNRAHEANSAETK) the composition is skewed to basic and acidic residues. Positions 121–140 (RDLNRAHEANSAETKRSKRK) are disordered. One can recognise a USP domain in the interval 162–655 (VGLKNVGNTC…SAYCLMYIND (494 aa)). Cys-171 functions as the Nucleophile in the catalytic mechanism. At Ser-376 the chain carries Phosphoserine. The interval 483-538 (DLTPKESSSPESCSQNAGSTFSSPEDALPSSEGMNGPFTSPHSSLETPAPPAPRTV) is disordered. Composition is skewed to polar residues over residues 487-505 (KESS…TFSS) and 519-528 (PFTSPHSSLE). At Ser-555 the chain carries Phosphoserine. His-605 functions as the Proton acceptor in the catalytic mechanism. A disordered region spans residues 703 to 735 (EEQSCKIPQMESSPNSSSQDFSTSQESPAVSSH). Residues 713–730 (ESSPNSSSQDFSTSQESP) are compositionally biased toward low complexity. Ser-720 carries the phosphoserine modification. Thr-1022 carries the phosphothreonine modification.

This sequence belongs to the peptidase C19 family. USP28 subfamily. Interacts with ZNF304. Interacts with PRKD1. Interacts with TP53BP1. Interacts with FBXW7; following DNA damage, dissociates from FBXW7 leading to degradation of MYC. Degraded upon nickel ion level or hypoxia exposure. In terms of processing, phosphorylated upon DNA damage at Ser-67 and Ser-720, by ATM or ATR. Phosphorylated by PRKD1.

The protein localises to the nucleus. The protein resides in the nucleoplasm. The catalysed reaction is Thiol-dependent hydrolysis of ester, thioester, amide, peptide and isopeptide bonds formed by the C-terminal Gly of ubiquitin (a 76-residue protein attached to proteins as an intracellular targeting signal).. Its function is as follows. Deubiquitinase involved in DNA damage response checkpoint and MYC proto-oncogene stability. Involved in DNA damage induced apoptosis by specifically deubiquitinating proteins of the DNA damage pathway such as CLSPN. Also involved in G2 DNA damage checkpoint, by deubiquitinating CLSPN, and preventing its degradation by the anaphase promoting complex/cyclosome (APC/C). In contrast, it does not deubiquitinate PLK1. Specifically deubiquitinates MYC in the nucleoplasm, leading to prevent MYC degradation by the proteasome: acts by specifically interacting with FBXW7 (FBW7alpha) in the nucleoplasm and counteracting ubiquitination of MYC by the SCF(FBXW7) complex. Deubiquitinates ZNF304, hence preventing ZNF304 degradation by the proteasome and leading to the activated KRAS-mediated promoter hypermethylation and transcriptional silencing of tumor suppressor genes (TSGs) in a subset of colorectal cancers (CRC) cells. The polypeptide is Ubiquitin carboxyl-terminal hydrolase 28 (Usp28) (Mus musculus (Mouse)).